A 589-amino-acid polypeptide reads, in one-letter code: V-type ATP synthase alpha chain (589 aa).

Residue 232-239 (GPFGSGKT) participates in ATP binding.

The protein belongs to the ATPase alpha/beta chains family.

It catalyses the reaction ATP + H2O + 4 H(+)(in) = ADP + phosphate + 5 H(+)(out). In terms of biological role, produces ATP from ADP in the presence of a proton gradient across the membrane. The V-type alpha chain is a catalytic subunit. The sequence is that of V-type ATP synthase alpha chain from Acetivibrio thermocellus (strain ATCC 27405 / DSM 1237 / JCM 9322 / NBRC 103400 / NCIMB 10682 / NRRL B-4536 / VPI 7372) (Clostridium thermocellum).